The primary structure comprises 130 residues: MKRRTAREKALQALFQIDVSDIAPNDAIEHALDGEKTDAFFEQLVYGVIEHQVQLDEMISGHLVNWKLDRIANVDRAILRLAVYEMVYSDDIPANVSLNEAIELAKRFGDDKAAKFVNGVLSNIKTDIES.

Belongs to the NusB family.

In terms of biological role, involved in transcription antitermination. Required for transcription of ribosomal RNA (rRNA) genes. Binds specifically to the boxA antiterminator sequence of the ribosomal RNA (rrn) operons. This is Transcription antitermination protein NusB from Bacillus velezensis (strain DSM 23117 / BGSC 10A6 / LMG 26770 / FZB42) (Bacillus amyloliquefaciens subsp. plantarum).